The following is a 448-amino-acid chain: MMAARLLGTSSRIFKLNKHLHTSKVAFMPVVQFKLSDIGEGIAEVQVKEWYVKEGDTISQFDKVCEVQSDKAAVTISCRYDGIVKKLYHEVDGMARVGQALIDVEIEGNVEEPEQPKKEAASSSPEAPKSSAPKAPESAHSEGKVLATPAVRRIAIENKIKLAEVRGTGKDGRVLKEDVLKFLGQVPADHTSGSTNIRTTHQAPQPSSKSYEPLKEDVAVPIRGYTRAMVKTMTEALKIPHFGYNDEINVDSLVKYRAELKEFAKERHIKLSYMPFFIKAASLALLEYPSLNSTTDEKMENVIHKASHNICLAMDTPGGLVVPNIKNCEQRSIFEIAQELNRLLEAGKKQQIKREDLIDGTFSLSNIGNIGGTYASPVVFPPQVAIGAIGKIEKLPRFDKHDNVIPVNIMKVSWCADHRVVDGATMARFSNRWKFYLEHPSAMLAQLK.

The region spanning V30 to E105 is the Lipoyl-binding domain. K71 carries the N6-lipoyllysine modification. Disordered stretches follow at residues G108–L146 and T191–Y211. The span at A121–P136 shows a compositional bias: low complexity. Residues L146–L183 form the Peripheral subunit-binding (PSBD) domain. Polar residues predominate over residues T191–S210. R257, S272, D315, S365, N366, G390, and I392 together coordinate CoA. Catalysis depends on residues H418 and D422.

It belongs to the 2-oxoacid dehydrogenase family. (R)-lipoate serves as cofactor. Ubiquitously expressed.

The protein resides in the mitochondrion matrix. It localises to the cytoplasm. It is found in the cytosol. The protein localises to the cell projection. Its subcellular location is the dendrite. The protein resides in the cilium. The catalysed reaction is N(6)-[(R)-dihydrolipoyl]-L-lysyl-[protein] + 2-methylpropanoyl-CoA = N(6)-[(R)-S(8)-2-methylpropanoyldihydrolipoyl]-L-lysyl-[protein] + CoA. Functionally, the branched-chain alpha-keto dehydrogenase complex catalyzes the overall conversion of alpha-keto acids to acyl-CoA and CO(2). It contains multiple copies of three enzymatic components: branched-chain alpha-keto acid decarboxylase (E1), lipoamide acyltransferase (E2) and lipoamide dehydrogenase (E3). Within this complex, the catalytic function of this enzyme is to accept, and to transfer to coenzyme A, acyl groups that are generated by the branched-chain alpha-keto acid decarboxylase component. Required for the catabolism of branched-chain amino acids and the subsequent synthesis of monomethyl branched-chain fatty acids, which are important for regulating postembryonic growth. This is Lipoamide acyltransferase component of branched-chain alpha-keto acid dehydrogenase complex, mitochondrial from Caenorhabditis elegans.